The sequence spans 255 residues: Post-GPI attachment to proteins factor 2 (255 aa).

5 helical membrane-spanning segments follow: residues 23-43 (LALV…IWSL), 111-131 (LGIL…CLSF), 143-163 (NAFV…YLLN), 185-205 (LFLV…RHNS), and 209-229 (AGVY…NMGF).

This sequence belongs to the PGAP2 family.

It localises to the golgi apparatus membrane. The protein resides in the endoplasmic reticulum membrane. Its function is as follows. Involved in the lipid remodeling steps of GPI-anchor maturation. Required for stable expression of GPI-anchored proteins at the cell surface. This is Post-GPI attachment to proteins factor 2 from Drosophila melanogaster (Fruit fly).